Reading from the N-terminus, the 429-residue chain is Histidine--tRNA ligase (429 aa).

This sequence belongs to the class-II aminoacyl-tRNA synthetase family. Homodimer.

It localises to the cytoplasm. The catalysed reaction is tRNA(His) + L-histidine + ATP = L-histidyl-tRNA(His) + AMP + diphosphate + H(+). The sequence is that of Histidine--tRNA ligase from Pseudomonas fluorescens (strain SBW25).